Consider the following 123-residue polypeptide: Basic phospholipase A2 Ph-TX1 (123 aa).

Residues tyrosine 27, glycine 29, and glycine 31 each coordinate Ca(2+). 6 disulfides stabilise this stretch: cysteine 28–cysteine 45, cysteine 44–cysteine 96, cysteine 50–cysteine 123, cysteine 51–cysteine 89, cysteine 59–cysteine 83, and cysteine 77–cysteine 87. The active site involves histidine 48. Aspartate 49 contacts Ca(2+). Aspartate 90 is an active-site residue.

It belongs to the phospholipase A2 family. Group II subfamily. D49 sub-subfamily. Monomer. It depends on Ca(2+) as a cofactor. Expressed by the venom gland.

The protein resides in the secreted. The catalysed reaction is a 1,2-diacyl-sn-glycero-3-phosphocholine + H2O = a 1-acyl-sn-glycero-3-phosphocholine + a fatty acid + H(+). With respect to regulation, inhibited by divalent cations different from calcium ions (cadmium, magnesium, manganese, zinc), since they act as competitive antagonists of this cofactor. Snake venom phospholipase A2 (PLA2) that induces in vivo myotoxicity, moderates footpad edema, and causes in vitro neuromuscular blockade. PLA2 catalyzes the calcium-dependent hydrolysis of the 2-acyl groups in 3-sn-phosphoglycerides. This is Basic phospholipase A2 Ph-TX1 from Bothrocophias hyoprora (Amazonian hognose viper).